Consider the following 244-residue polypeptide: ATP synthase subunit a (244 aa).

7 helical membrane passes run 17–37 (LSNV…AVLT), 74–94 (PFLA…MLGL), 112–132 (DPAI…YYGV), 148–168 (IPLL…TLGL), 171–191 (YGNI…ATNF), 196–216 (IALG…WQAF), and 217–237 (SLFV…VYIS).

Belongs to the ATPase A chain family. In terms of assembly, F-type ATPases have 2 components, CF(1) - the catalytic core - and CF(0) - the membrane proton channel. CF(1) has five subunits: alpha(3), beta(3), gamma(1), delta(1), epsilon(1). CF(0) has three main subunits: a(1), b(2) and c(9-12). The alpha and beta chains form an alternating ring which encloses part of the gamma chain. CF(1) is attached to CF(0) by a central stalk formed by the gamma and epsilon chains, while a peripheral stalk is formed by the delta and b chains.

The protein resides in the cell membrane. Key component of the proton channel; it plays a direct role in the translocation of protons across the membrane. The protein is ATP synthase subunit a of Bacillus pumilus (strain SAFR-032).